The following is a 258-amino-acid chain: Acetylglutamate kinase (258 aa).

Residues 40–41, R62, and N158 each bind substrate; that span reads GG.

This sequence belongs to the acetylglutamate kinase family. ArgB subfamily.

Its subcellular location is the cytoplasm. It carries out the reaction N-acetyl-L-glutamate + ATP = N-acetyl-L-glutamyl 5-phosphate + ADP. The protein operates within amino-acid biosynthesis; L-arginine biosynthesis; N(2)-acetyl-L-ornithine from L-glutamate: step 2/4. Catalyzes the ATP-dependent phosphorylation of N-acetyl-L-glutamate. This chain is Acetylglutamate kinase, found in Azobacteroides pseudotrichonymphae genomovar. CFP2.